The chain runs to 443 residues: MRELVHMQAGQCGNQIGSKFWETISQEHGIDEMGSYHGDSDLQLERINVYYNEGQGGKYVPRALLIDLEPGTMDSVRSGPLGKLFRPDNFIFGQSGAGNNWAKGHYTEGAELIEEVLDVVRKECEACDCLQGFQLCHSLGGGTGSGMGTLLIAKIREEYPDRIMTSFSVVPSPKVSDTVVEPYNATLSVHQLVESTDETFCIDNEALYDICFRTLKLPNPNYSDLNHLVSLTMSGVTTSLRFPGQLNSDLRKLAVNMVPFPRLHFFVPGFAPLASRTSQSYQSCTILELTRQMFDAKNMMAACDPSHGRYLTVAAMYRGRVSMKEVEDRILETQTRNSTYFVEWIPNNVKTAVCDIPPIDFKVAGTFIGNTTAIQELFTRVSDQFSAMFRRRAFLHFFTSEGMDEMEFSEAESNMNDLISEYQQYQEVGIDDDYGEEEAAPEE.

Positions 11, 69, 138, 142, 143, 144, 204, and 226 each coordinate GTP. Position 69 (Glu-69) interacts with Mg(2+).

This sequence belongs to the tubulin family. Dimer of alpha and beta chains. A typical microtubule is a hollow water-filled tube with an outer diameter of 25 nm and an inner diameter of 15 nM. Alpha-beta heterodimers associate head-to-tail to form protofilaments running lengthwise along the microtubule wall with the beta-tubulin subunit facing the microtubule plus end conferring a structural polarity. Microtubules usually have 13 protofilaments but different protofilament numbers can be found in some organisms and specialized cells. The cofactor is Mg(2+).

It localises to the cytoplasm. The protein localises to the cytoskeleton. Tubulin is the major constituent of microtubules, a cylinder consisting of laterally associated linear protofilaments composed of alpha- and beta-tubulin heterodimers. Microtubules grow by the addition of GTP-tubulin dimers to the microtubule end, where a stabilizing cap forms. Below the cap, tubulin dimers are in GDP-bound state, owing to GTPase activity of alpha-tubulin. The protein is Tubulin beta-3 chain (TUB-3) of Echinococcus multilocularis (Fox tapeworm).